The primary structure comprises 417 residues: Imidazolonepropionase (417 aa).

Positions 80 and 82 each coordinate Fe(3+). Zn(2+) contacts are provided by H80 and H82. 3 residues coordinate 4-imidazolone-5-propanoate: R89, Y152, and H187. Y152 contributes to the N-formimidoyl-L-glutamate binding site. H252 is a binding site for Fe(3+). Residue H252 participates in Zn(2+) binding. E255 provides a ligand contact to 4-imidazolone-5-propanoate. D326 provides a ligand contact to Fe(3+). Residue D326 participates in Zn(2+) binding. Positions 328 and 330 each coordinate N-formimidoyl-L-glutamate. S331 serves as a coordination point for 4-imidazolone-5-propanoate.

It belongs to the metallo-dependent hydrolases superfamily. HutI family. It depends on Zn(2+) as a cofactor. Requires Fe(3+) as cofactor.

The protein resides in the cytoplasm. It carries out the reaction 4-imidazolone-5-propanoate + H2O = N-formimidoyl-L-glutamate. The protein operates within amino-acid degradation; L-histidine degradation into L-glutamate; N-formimidoyl-L-glutamate from L-histidine: step 3/3. In terms of biological role, catalyzes the hydrolytic cleavage of the carbon-nitrogen bond in imidazolone-5-propanoate to yield N-formimidoyl-L-glutamate. It is the third step in the universal histidine degradation pathway. The sequence is that of Imidazolonepropionase from Bacteroides thetaiotaomicron (strain ATCC 29148 / DSM 2079 / JCM 5827 / CCUG 10774 / NCTC 10582 / VPI-5482 / E50).